We begin with the raw amino-acid sequence, 306 residues long: uncharacterized protein (306 aa).

It belongs to the asfivirus CP312R family.

Its subcellular location is the virion. This is an uncharacterized protein from African swine fever virus (isolate Pig/Kenya/KEN-50/1950) (ASFV).